Here is a 342-residue protein sequence, read N- to C-terminus: Phosphate acyltransferase (342 aa).

This sequence belongs to the PlsX family. As to quaternary structure, homodimer. Probably interacts with PlsY.

It localises to the cytoplasm. It catalyses the reaction a fatty acyl-[ACP] + phosphate = an acyl phosphate + holo-[ACP]. It participates in lipid metabolism; phospholipid metabolism. Functionally, catalyzes the reversible formation of acyl-phosphate (acyl-PO(4)) from acyl-[acyl-carrier-protein] (acyl-ACP). This enzyme utilizes acyl-ACP as fatty acyl donor, but not acyl-CoA. The sequence is that of Phosphate acyltransferase from Shewanella baltica (strain OS155 / ATCC BAA-1091).